The following is a 550-amino-acid chain: Acidic amino acid decarboxylase GADL1 (550 aa).

Lys362 is subject to N6-(pyridoxal phosphate)lysine.

It belongs to the group II decarboxylase family. Homodimer. It depends on pyridoxal 5'-phosphate as a cofactor. As to expression, expressed in skeletal muscles and kidney (at protein level). Expressed in skeletal muscle and weakly in brain. Not expressed in liver or kidney. Expressed in brain, olfactory bulb, liver, muscle and kidney with the highest expression in olfactory bulb and almost not detected in liver (at protein level).

It carries out the reaction L-aspartate + H(+) = beta-alanine + CO2. It catalyses the reaction 3-sulfino-L-alanine + H(+) = hypotaurine + CO2. The catalysed reaction is L-cysteate + H(+) = taurine + CO2. Activated weakly by 0.2-0.4 mM Li(+). Inhibited by bis-carboxymethyl-trithiocarbonate, ethylxanthogenacetic acid and 2,5-disulfoaniline. Functionally, catalyzes the decarboxylation of L-aspartate, 3-sulfino-L-alanine (cysteine sulfinic acid), and L-cysteate to beta-alanine, hypotaurine and taurine, respectively. The preferred substrate is L-aspartate. Does not exhibit any decarboxylation activity toward glutamate. The sequence is that of Acidic amino acid decarboxylase GADL1 from Mus musculus (Mouse).